The sequence spans 95 residues: Large ribosomal subunit protein bL27 (95 aa).

The propeptide occupies 1–6; that stretch reads MILQLF.

The protein belongs to the bacterial ribosomal protein bL27 family. In terms of processing, the N-terminus is cleaved by ribosomal processing cysteine protease Prp.

This is Large ribosomal subunit protein bL27 from Caldanaerobacter subterraneus subsp. tengcongensis (strain DSM 15242 / JCM 11007 / NBRC 100824 / MB4) (Thermoanaerobacter tengcongensis).